A 1015-amino-acid polypeptide reads, in one-letter code: Proline-rich basic protein 1 (1015 aa).

Disordered regions lie at residues M1 to M111, A139 to G164, G196 to S236, L259 to Q460, D488 to H678, V690 to L883, and P991 to L1015. Over residues P84–S94 the composition is skewed to gly residues. Low complexity predominate over residues P220–R233. Positions S267–R276 are enriched in polar residues. 3 stretches are compositionally biased toward basic and acidic residues: residues S277–D304, L318–P328, and S346–V367. Residues P380–R391 show a composition bias toward low complexity. The segment covering I531–T542 has biased composition (polar residues). Composition is skewed to pro residues over residues P548–P557 and V691–P700. The segment covering E759 to G774 has biased composition (basic and acidic residues). Positions G813–P825 are enriched in pro residues. Low complexity-rich tracts occupy residues E826–L835 and A847–P858. Residues R861 to A870 show a composition bias toward polar residues. Residues L993–P1004 are compositionally biased toward low complexity.

The sequence is that of Proline-rich basic protein 1 (PROB1) from Homo sapiens (Human).